Here is a 175-residue protein sequence, read N- to C-terminus: Adenine phosphoribosyltransferase (175 aa).

The protein belongs to the purine/pyrimidine phosphoribosyltransferase family. In terms of assembly, homodimer.

The protein resides in the cytoplasm. It carries out the reaction AMP + diphosphate = 5-phospho-alpha-D-ribose 1-diphosphate + adenine. It participates in purine metabolism; AMP biosynthesis via salvage pathway; AMP from adenine: step 1/1. Functionally, catalyzes a salvage reaction resulting in the formation of AMP, that is energically less costly than de novo synthesis. The sequence is that of Adenine phosphoribosyltransferase from Lactobacillus delbrueckii subsp. bulgaricus (strain ATCC 11842 / DSM 20081 / BCRC 10696 / JCM 1002 / NBRC 13953 / NCIMB 11778 / NCTC 12712 / WDCM 00102 / Lb 14).